We begin with the raw amino-acid sequence, 231 residues long: Regulatory factor X-associated protein (231 aa).

The segment at 1-163 is disordered; the sequence is MEAQAVPEGS…GNVKLEESTD (163 aa). Acidic residues predominate over residues 50-65; the sequence is ADAEDEAGDDDADLLD. Over residues 115-138 the composition is skewed to basic residues; sequence KQRKPWMCKKHRNKMYKDKYKKKK. A Nuclear localization signal motif is present at residues 123 to 138; it reads KKHRNKMYKDKYKKKK. A Glycyl lysine isopeptide (Lys-Gly) (interchain with G-Cter in SUMO2) cross-link involves residue Lys157.

RFX consists of at least 3 different subunits; RFXAP, RFX5 and RFX-B/RFXANK; with each subunit representing a separate complementation group. RFX forms cooperative DNA binding complexes with X2BP and CBF/NF-Y. RFX associates with CIITA to form an active transcriptional complex. In terms of processing, phosphorylated.

Its subcellular location is the nucleus. Part of the RFX complex that binds to the X-box of MHC II promoters. This Mus musculus (Mouse) protein is Regulatory factor X-associated protein (Rfxap).